We begin with the raw amino-acid sequence, 56 residues long: MAVPKKKKSKSKRNHRHAVWKGKAAIAAQKAISLGKSVLTGKAQGFVYPIEEEEEE.

Over residues 1–20 (MAVPKKKKSKSKRNHRHAVW) the composition is skewed to basic residues. A disordered region spans residues 1–21 (MAVPKKKKSKSKRNHRHAVWK).

It belongs to the bacterial ribosomal protein bL32 family.

The polypeptide is Large ribosomal subunit protein bL32 (Prochlorococcus marinus (strain MIT 9312)).